A 244-amino-acid chain; its full sequence is 6-carboxyhexanoate--CoA ligase (244 aa).

It belongs to the BioW family. As to quaternary structure, homodimer. The cofactor is Mg(2+).

It catalyses the reaction heptanedioate + ATP + CoA = 6-carboxyhexanoyl-CoA + AMP + diphosphate. It participates in metabolic intermediate metabolism; pimeloyl-CoA biosynthesis; pimeloyl-CoA from pimelate: step 1/1. In terms of biological role, catalyzes the transformation of pimelate into pimeloyl-CoA with concomitant hydrolysis of ATP to AMP. This chain is 6-carboxyhexanoate--CoA ligase, found in Methanococcus maripaludis (strain C7 / ATCC BAA-1331).